The chain runs to 194 residues: FMN-dependent NADH:quinone oxidoreductase (194 aa).

Residues serine 10 and 90-93 (MYNL) contribute to the FMN site.

This sequence belongs to the azoreductase type 1 family. Homodimer. FMN serves as cofactor.

It carries out the reaction 2 a quinone + NADH + H(+) = 2 a 1,4-benzosemiquinone + NAD(+). The enzyme catalyses N,N-dimethyl-1,4-phenylenediamine + anthranilate + 2 NAD(+) = 2-(4-dimethylaminophenyl)diazenylbenzoate + 2 NADH + 2 H(+). Quinone reductase that provides resistance to thiol-specific stress caused by electrophilic quinones. Its function is as follows. Also exhibits azoreductase activity. Catalyzes the reductive cleavage of the azo bond in aromatic azo compounds to the corresponding amines. The chain is FMN-dependent NADH:quinone oxidoreductase from Haemophilus influenzae (strain ATCC 51907 / DSM 11121 / KW20 / Rd).